Consider the following 138-residue polypeptide: ATP synthase epsilon chain, chloroplastic (138 aa).

It belongs to the ATPase epsilon chain family. As to quaternary structure, F-type ATPases have 2 components, CF(1) - the catalytic core - and CF(0) - the membrane proton channel. CF(1) has five subunits: alpha(3), beta(3), gamma(1), delta(1), epsilon(1). CF(0) has three main subunits: a, b and c.

The protein resides in the plastid. It localises to the chloroplast thylakoid membrane. Produces ATP from ADP in the presence of a proton gradient across the membrane. The polypeptide is ATP synthase epsilon chain, chloroplastic (Galdieria sulphuraria (Red alga)).